Consider the following 171-residue polypeptide: Co-chaperone protein HscB (171 aa).

In terms of domain architecture, J spans 2 to 74; that stretch reads DYFTLFGLPA…LTRAEYLLSL (73 aa).

This sequence belongs to the HscB family. Interacts with HscA and stimulates its ATPase activity. Interacts with IscU.

Functionally, co-chaperone involved in the maturation of iron-sulfur cluster-containing proteins. Seems to help targeting proteins to be folded toward HscA. The polypeptide is Co-chaperone protein HscB (Salmonella arizonae (strain ATCC BAA-731 / CDC346-86 / RSK2980)).